A 290-amino-acid chain; its full sequence is Ribosomal RNA small subunit methyltransferase A (290 aa).

S-adenosyl-L-methionine-binding residues include Asn-27, Leu-29, Gly-54, Glu-75, Asp-100, and Asn-125.

It belongs to the class I-like SAM-binding methyltransferase superfamily. rRNA adenine N(6)-methyltransferase family. RsmA subfamily.

The protein localises to the cytoplasm. It carries out the reaction adenosine(1518)/adenosine(1519) in 16S rRNA + 4 S-adenosyl-L-methionine = N(6)-dimethyladenosine(1518)/N(6)-dimethyladenosine(1519) in 16S rRNA + 4 S-adenosyl-L-homocysteine + 4 H(+). Functionally, specifically dimethylates two adjacent adenosines (A1518 and A1519) in the loop of a conserved hairpin near the 3'-end of 16S rRNA in the 30S particle. May play a critical role in biogenesis of 30S subunits. The protein is Ribosomal RNA small subunit methyltransferase A of Streptococcus equi subsp. zooepidemicus (strain H70).